The sequence spans 349 residues: tRNA pseudouridine synthase D (349 aa).

Substrate is bound at residue F26. D79 functions as the Nucleophile in the catalytic mechanism. A substrate-binding site is contributed by N128. Residues 154–302 (GVPNYFGSQR…VEGSRRAVLL (149 aa)) enclose the TRUD domain. F328 provides a ligand contact to substrate.

This sequence belongs to the pseudouridine synthase TruD family.

It carries out the reaction uridine(13) in tRNA = pseudouridine(13) in tRNA. Responsible for synthesis of pseudouridine from uracil-13 in transfer RNAs. The polypeptide is tRNA pseudouridine synthase D (Yersinia pestis bv. Antiqua (strain Antiqua)).